We begin with the raw amino-acid sequence, 86 residues long: Large ribosomal subunit protein uL23 (86 aa).

It belongs to the universal ribosomal protein uL23 family. Part of the 50S ribosomal subunit. Contacts protein L29.

In terms of biological role, binds to 23S rRNA. One of the proteins that surrounds the polypeptide exit tunnel on the outside of the ribosome. This is Large ribosomal subunit protein uL23 from Methanobrevibacter smithii (strain ATCC 35061 / DSM 861 / OCM 144 / PS).